The chain runs to 93 residues: Aspartyl/glutamyl-tRNA(Asn/Gln) amidotransferase subunit C (93 aa).

This sequence belongs to the GatC family. As to quaternary structure, heterotrimer of A, B and C subunits.

The enzyme catalyses L-glutamyl-tRNA(Gln) + L-glutamine + ATP + H2O = L-glutaminyl-tRNA(Gln) + L-glutamate + ADP + phosphate + H(+). It carries out the reaction L-aspartyl-tRNA(Asn) + L-glutamine + ATP + H2O = L-asparaginyl-tRNA(Asn) + L-glutamate + ADP + phosphate + 2 H(+). In terms of biological role, allows the formation of correctly charged Asn-tRNA(Asn) or Gln-tRNA(Gln) through the transamidation of misacylated Asp-tRNA(Asn) or Glu-tRNA(Gln) in organisms which lack either or both of asparaginyl-tRNA or glutaminyl-tRNA synthetases. The reaction takes place in the presence of glutamine and ATP through an activated phospho-Asp-tRNA(Asn) or phospho-Glu-tRNA(Gln). This is Aspartyl/glutamyl-tRNA(Asn/Gln) amidotransferase subunit C from Methanothrix thermoacetophila (strain DSM 6194 / JCM 14653 / NBRC 101360 / PT) (Methanosaeta thermophila).